The sequence spans 449 residues: Wilms tumor protein homolog (449 aa).

Residues 48 to 84 (YGSLGGPAPPPAPPPPPPPPPHSFIKQEPSWGGAEPH) form a disordered region. Positions 54-69 (PAPPPAPPPPPPPPPH) are enriched in pro residues. Residues lysine 73 and lysine 177 each participate in a glycyl lysine isopeptide (Lys-Gly) (interchain with G-Cter in SUMO) cross-link. Positions 236–244 (MTWNQMNLG) match the 9aaTAD motif. C2H2-type zinc fingers lie at residues 323-347 (FMCA…SRKH), 353-377 (YQCD…QRRH), and 383-405 (FQCK…TRTH). Important for interaction with target DNA regions lie at residues 367–381 (SDQL…TGVK) and 393–401 (SRSDHLKTH). The KTS motif motif lies at 408-410 (KTS). The C2H2-type 4 zinc finger occupies 414-438 (FSCRWPSCQKKFARSDELVRHHNMH). Lysine 444 participates in a covalent cross-link: Glycyl lysine isopeptide (Lys-Gly) (interchain with G-Cter in SUMO2).

It belongs to the EGR C2H2-type zinc-finger protein family. In terms of assembly, interacts with ZNF224 via the zinc-finger region. Interacts with WTAP, AMER1 and SRY. Homodimer. Interacts with WTIP. Interacts with actively translating polysomes. Detected in nuclear ribonucleoprotein (mRNP) particles. Interacts with U2AF2. Interacts with HNRNPU via the zinc-finger region. Interacts with CITED2. Interacts with RBM4.

The protein localises to the nucleus speckle. The protein resides in the nucleus. Its subcellular location is the nucleoplasm. It is found in the nucleolus. It localises to the cytoplasm. Functionally, transcription factor that plays an important role in cellular development and cell survival. Recognizes and binds to the DNA sequence 5'-GCG(T/G)GGGCG-3'. Regulates the expression of numerous target genes, including EPO. Plays an essential role for development of the urogenital system. It has a tumor suppressor as well as an oncogenic role in tumor formation. Function may be isoform-specific: isoforms lacking the KTS motif may act as transcription factors. Isoforms containing the KTS motif may bind mRNA and play a role in mRNA metabolism or splicing. Isoform 1 has lower affinity for DNA, and can bind RNA. The protein is Wilms tumor protein homolog (WT1) of Sus scrofa (Pig).